The chain runs to 31 residues: Cytochrome b6-f complex subunit 8 (31 aa).

The helical transmembrane segment at 5–25 threads the bilayer; the sequence is IVSLAWAALMVVFTFSLSLVV.

Belongs to the PetN family. As to quaternary structure, the 4 large subunits of the cytochrome b6-f complex are cytochrome b6, subunit IV (17 kDa polypeptide, PetD), cytochrome f and the Rieske protein, while the 4 small subunits are PetG, PetL, PetM and PetN. The complex functions as a dimer.

Its subcellular location is the plastid. The protein localises to the chloroplast thylakoid membrane. Functionally, component of the cytochrome b6-f complex, which mediates electron transfer between photosystem II (PSII) and photosystem I (PSI), cyclic electron flow around PSI, and state transitions. The chain is Cytochrome b6-f complex subunit 8 from Cicer arietinum (Chickpea).